The following is a 620-amino-acid chain: Translocator protein BipB (620 aa).

The tract at residues 58–95 (QCDAQPAAHDARLDDRPALRAPQERDAPPLGASDTGSR) is disordered. Positions 66-84 (HDARLDDRPALRAPQERDA) are enriched in basic and acidic residues. A coiled-coil region spans residues 309–339 (EMQAKREAELQKKSDEYQAQVKKAEEMQKTM). A run of 3 helical transmembrane segments spans residues 355-375 (FAAAAFTGGASLALAAVGLAL), 401-421 (AILKPLMEMISSLITKALVAC), and 430-450 (LAGAILGAVVTGVALVAAAFV).

The protein belongs to the SctE/SipB/YopB family.

The protein localises to the secreted. It localises to the host membrane. Plays a role in the bacterium-induced formation of multinucleated giant cell (MNGC), which is formed after host cell fusion, as well as in the intercellular spreading of bacteria and in the induction of apoptosis in macrophages. May act in concert with other effector proteins to induce fusion of host cell membranes. In Burkholderia mallei (strain NCTC 10247), this protein is Translocator protein BipB (bipB).